We begin with the raw amino-acid sequence, 313 residues long: Esterase mpl1 (313 aa).

Active-site charge relay system residues include Ser-174, Asp-259, and His-287.

It belongs to the LovG family.

Its pathway is mycotoxin biosynthesis. In terms of biological role, esterase; part of the gene cluster that mediates the biosynthesis of the mycotoxin citrinin, a hepato-nephrotoxic compound to humans due to inhibition of respiration complex III. The pathway begins with the synthesis of a keto-aldehyde intermediate by the citrinin PKS (pksCT) from successive condensations of 4 malonyl-CoA units, presumably with a simple acetyl-CoA starter unit. Release of the keto-aldehyde intermediate is consistent with the presence of the C-terminal reductive release domain. Mp11 collaborates with pksCT by catalyzing the hydrolysis of ACP-bound acyl intermediates to free the ACP from stalled intermediates. Mpl2 then catalyzes the oxidation of the C-12 methyl of the ketone intermediate to an alcohol intermediate which is further oxidized by the oxidoreductase mpl7 to produce a bisaldehyde intermediate. The fourth catalytic step is catalyzed by the mpl4 aldehyde dehydrogenase. The final transformation is the reduction of C-3 by mpl6 to provide the chemically stable citrinin nucleus. This Monascus purpureus (Red mold) protein is Esterase mpl1.